A 61-amino-acid polypeptide reads, in one-letter code: Photosystem II reaction center protein K (61 aa).

Residues 1–24 constitute a propeptide that is removed on maturation; it reads MPNILSLTCICFNSVLCPTSFFFA. A helical membrane pass occupies residues 32–52; the sequence is IFNPIVDVMPVIPVLFFLLAF.

Belongs to the PsbK family. PSII is composed of 1 copy each of membrane proteins PsbA, PsbB, PsbC, PsbD, PsbE, PsbF, PsbH, PsbI, PsbJ, PsbK, PsbL, PsbM, PsbT, PsbX, PsbY, PsbZ, Psb30/Ycf12, at least 3 peripheral proteins of the oxygen-evolving complex and a large number of cofactors. It forms dimeric complexes.

It localises to the plastid. Its subcellular location is the chloroplast thylakoid membrane. In terms of biological role, one of the components of the core complex of photosystem II (PSII). PSII is a light-driven water:plastoquinone oxidoreductase that uses light energy to abstract electrons from H(2)O, generating O(2) and a proton gradient subsequently used for ATP formation. It consists of a core antenna complex that captures photons, and an electron transfer chain that converts photonic excitation into a charge separation. The sequence is that of Photosystem II reaction center protein K from Sorghum bicolor (Sorghum).